Consider the following 516-residue polypeptide: Cytochrome P450 1A2 (516 aa).

The O-linked (GlcNAc) serine glycan is linked to Ser-69. Substrate is bound at residue Phe-226. Cys-458 provides a ligand contact to heme.

Belongs to the cytochrome P450 family. Interacts with PGRMC1; the interaction requires PGRMC1 homodimerization. Heme serves as cofactor.

It is found in the endoplasmic reticulum membrane. Its subcellular location is the microsome membrane. It catalyses the reaction an organic molecule + reduced [NADPH--hemoprotein reductase] + O2 = an alcohol + oxidized [NADPH--hemoprotein reductase] + H2O + H(+). The enzyme catalyses 17beta-estradiol + reduced [NADPH--hemoprotein reductase] + O2 = 2-hydroxy-17beta-estradiol + oxidized [NADPH--hemoprotein reductase] + H2O + H(+). The catalysed reaction is 17beta-estradiol + reduced [NADPH--hemoprotein reductase] + O2 = 4-hydroxy-17beta-estradiol + oxidized [NADPH--hemoprotein reductase] + H2O + H(+). It carries out the reaction estrone + reduced [NADPH--hemoprotein reductase] + O2 = 2-hydroxyestrone + oxidized [NADPH--hemoprotein reductase] + H2O + H(+). It catalyses the reaction estrone + reduced [NADPH--hemoprotein reductase] + O2 = 4-hydroxyestrone + oxidized [NADPH--hemoprotein reductase] + H2O + H(+). The enzyme catalyses cholesterol + reduced [NADPH--hemoprotein reductase] + O2 = 25-hydroxycholesterol + oxidized [NADPH--hemoprotein reductase] + H2O + H(+). The catalysed reaction is all-trans-retinol + reduced [NADPH--hemoprotein reductase] + O2 = all-trans-retinal + oxidized [NADPH--hemoprotein reductase] + 2 H2O + H(+). It carries out the reaction all-trans-retinal + reduced [NADPH--hemoprotein reductase] + O2 = all-trans-retinoate + oxidized [NADPH--hemoprotein reductase] + H2O + 2 H(+). It catalyses the reaction (5Z,8Z,11Z,14Z)-eicosatetraenoate + reduced [NADPH--hemoprotein reductase] + O2 = (14R,15S)-epoxy-(5Z,8Z,11Z)-eicosatrienoate + oxidized [NADPH--hemoprotein reductase] + H2O + H(+). The enzyme catalyses (5Z,8Z,11Z,14Z)-eicosatetraenoate + reduced [NADPH--hemoprotein reductase] + O2 = (14S,15R)-epoxy-(5Z,8Z,11Z)-eicosatrienoate + oxidized [NADPH--hemoprotein reductase] + H2O + H(+). The catalysed reaction is (5Z,8Z,11Z,14Z,17Z)-eicosapentaenoate + reduced [NADPH--hemoprotein reductase] + O2 = (17R,18S)-epoxy-(5Z,8Z,11Z,14Z)-eicosatetraenoate + oxidized [NADPH--hemoprotein reductase] + H2O + H(+). It carries out the reaction (4Z,7Z,10Z,13Z,16Z,19Z)-docosahexaenoate + reduced [NADPH--hemoprotein reductase] + O2 = (19R,20S)-epoxy-(4Z,7Z,10Z,13Z,16Z)-docosapentaenoate + oxidized [NADPH--hemoprotein reductase] + H2O + H(+). It catalyses the reaction (5S)-hydroperoxy-(6E,8Z,11Z,14Z)-eicosatetraenoate = 5-oxo-(6E,8Z,11Z,14Z)-eicosatetraenoate + H2O. The enzyme catalyses (12S)-hydroperoxy-(5Z,8Z,10E,14Z)-eicosatetraenoate = 12-oxo-(5Z,8Z,10E,14Z)-eicosatetraenoate + H2O. The catalysed reaction is (15S)-hydroperoxy-(5Z,8Z,11Z,13E)-eicosatetraenoate = 15-oxo-(5Z,8Z,11Z,13E)-eicosatetraenoate + H2O. It carries out the reaction (13S)-hydroperoxy-(9Z,11E)-octadecadienoate = 13-oxo-(9Z,11E)-octadecadienoate + H2O. It catalyses the reaction (5Z,8Z,11Z,14Z)-eicosatetraenoate + reduced [NADPH--hemoprotein reductase] + O2 = 13-hydroxy-(5Z,8Z,11Z,14Z)-eicosatetraenoate + oxidized [NADPH--hemoprotein reductase] + H2O + H(+). The enzyme catalyses (5Z,8Z,11Z,14Z)-eicosatetraenoate + reduced [NADPH--hemoprotein reductase] + O2 = 19-hydroxy-(5Z,8Z,11Z,14Z)-eicosatetraenoate + oxidized [NADPH--hemoprotein reductase] + H2O + H(+). The catalysed reaction is (9Z,12Z)-octadecadienoate + reduced [NADPH--hemoprotein reductase] + O2 = 11-hydroxy-(9Z,12Z)-octadecadienoate + oxidized [NADPH--hemoprotein reductase] + H2O + H(+). The protein operates within cofactor metabolism; retinol metabolism. It functions in the pathway steroid metabolism; cholesterol metabolism. It participates in lipid metabolism; arachidonate metabolism. A cytochrome P450 monooxygenase involved in the metabolism of various endogenous substrates, including fatty acids, steroid hormones and vitamins. Mechanistically, uses molecular oxygen inserting one oxygen atom into a substrate, and reducing the second into a water molecule, with two electrons provided by NADPH via cytochrome P450 reductase (NADPH--hemoprotein reductase). Catalyzes the hydroxylation of carbon-hydrogen bonds. Exhibits high catalytic activity for the formation of hydroxyestrogens from estrone (E1) and 17beta-estradiol (E2), namely 2-hydroxy E1 and E2. Metabolizes cholesterol toward 25-hydroxycholesterol, a physiological regulator of cellular cholesterol homeostasis. May act as a major enzyme for all-trans retinoic acid biosynthesis in the liver. Catalyzes two successive oxidative transformation of all-trans retinol to all-trans retinal and then to the active form all-trans retinoic acid. Primarily catalyzes stereoselective epoxidation of the last double bond of polyunsaturated fatty acids (PUFA), displaying a strong preference for the (R,S) stereoisomer. Catalyzes bisallylic hydroxylation and omega-1 hydroxylation of PUFA. May also participate in eicosanoids metabolism by converting hydroperoxide species into oxo metabolites (lipoxygenase-like reaction, NADPH-independent). Plays a role in the oxidative metabolism of xenobiotics. Catalyzes the N-hydroxylation of heterocyclic amines and the O-deethylation of phenacetin. Metabolizes caffeine via N3-demethylation. This chain is Cytochrome P450 1A2 (CYP1A2), found in Pongo abelii (Sumatran orangutan).